We begin with the raw amino-acid sequence, 492 residues long: ATP synthase subunit beta, chloroplastic (492 aa).

170-177 serves as a coordination point for ATP; sequence GGAGVGKT.

This sequence belongs to the ATPase alpha/beta chains family. F-type ATPases have 2 components, CF(1) - the catalytic core - and CF(0) - the membrane proton channel. CF(1) has five subunits: alpha(3), beta(3), gamma(1), delta(1), epsilon(1). CF(0) has four main subunits: a(1), b(1), b'(1) and c(9-12).

The protein resides in the plastid. It is found in the chloroplast thylakoid membrane. The enzyme catalyses ATP + H2O + 4 H(+)(in) = ADP + phosphate + 5 H(+)(out). In terms of biological role, produces ATP from ADP in the presence of a proton gradient across the membrane. The catalytic sites are hosted primarily by the beta subunits. The chain is ATP synthase subunit beta, chloroplastic from Huperzia lucidula (Shining clubmoss).